The sequence spans 619 residues: Probable transporter mch1 (619 aa).

Transmembrane regions (helical) follow at residues 88-108 (VISCLGAGSITAFSLYGPLFL), 120-140 (AVSIAAEISMYLPVPLFGYLC), 147-167 (PLALLSGLVFGGGYLLAAFAY), 184-204 (VMVVAFVAIGTATSCMYLAAV), 219-239 (IMLAVPIAGFGLSGMWQSQVA), 261-281 (FLFLALFLFCLGVIGTFGLRI), 377-397 (TMWWLAVGFFLVTGPGEAYIN), 428-448 (IIALTSTIARLLTGSLSDFFA), 480-500 (LAFLLPSALLLSLGYLLLSSP), 515-535 (LIGLGYGSAFSLVPIIISVVW), 541-561 (GTNWGIVAMVPAAGAAMWGVI), and 589-609 (FWAVGCTLSVWVAVVAWILAW).

This sequence belongs to the major facilitator superfamily.

It is found in the vacuole membrane. Its function is as follows. Probable transporter. The sequence is that of Probable transporter mch1 (mch1) from Aspergillus fumigatus (strain ATCC MYA-4609 / CBS 101355 / FGSC A1100 / Af293) (Neosartorya fumigata).